The primary structure comprises 106 residues: UPF0145 protein azo0572 (106 aa).

The protein belongs to the UPF0145 family.

This chain is UPF0145 protein azo0572, found in Azoarcus sp. (strain BH72).